The sequence spans 240 residues: Probable hydroxyacylglutathione hydrolase (240 aa).

The Zn(2+) site is built by His33, His35, Asp37, His38, His95, and Asp119. Residues Arg128, 158–160 (HEY), and 234–237 (REEK) each bind substrate. His158 contributes to the Zn(2+) binding site.

This sequence belongs to the metallo-beta-lactamase superfamily. Glyoxalase II family. It depends on Zn(2+) as a cofactor.

The enzyme catalyses an S-(2-hydroxyacyl)glutathione + H2O = a 2-hydroxy carboxylate + glutathione + H(+). It functions in the pathway secondary metabolite metabolism; methylglyoxal degradation; (R)-lactate from methylglyoxal: step 2/2. Its function is as follows. Thiolesterase that catalyzes the hydrolysis of S-D-lactoyl-glutathione to form glutathione and D-lactic acid. The polypeptide is Probable hydroxyacylglutathione hydrolase (Schistosoma mansoni (Blood fluke)).